A 90-amino-acid polypeptide reads, in one-letter code: Cytochrome c7 (90 aa).

An N-terminal signal peptide occupies residues 1-20 (MKRIIASLALSVFCAGLAFA). 12 residues coordinate heme: H37, H40, C47, C50, H51, H67, C70, C73, H74, C84, C87, and H88.

In terms of processing, binds 3 heme groups per subunit.

Functionally, may be involved in anaerobic iron respiration. In Geobacter metallireducens (strain ATCC 53774 / DSM 7210 / GS-15), this protein is Cytochrome c7.